Reading from the N-terminus, the 419-residue chain is Prolyl hydroxylase EGLN2 (419 aa).

2 stretches are compositionally biased toward low complexity: residues 1–18 (MDSPCQPQALNQALPQLP) and 64–73 (TTATATTTTA). 2 disordered regions span residues 1–89 (MDSP…GELW) and 108–181 (AAQG…REEV). The Bipartite nuclear localization signal motif lies at 89–134 (WPLQSEGAAALVTKECQRLAAQGARPEAPKRKWAKDGGDAPSPSKR). Residues 115–126 (EAPKRKWAKDGG) show a composition bias toward basic and acidic residues. Serine 130 bears the Phosphoserine mark. Over residues 154–174 (SGASNSSSSSSNTTSSSGEAS) the composition is skewed to low complexity. The beta(2)beta(3) 'finger-like' loop stretch occupies residues 237-247 (VSQRAIPPRSI). The 99-residue stretch at 290 to 388 (GRTKAMVACY…RYAITVWYFD (99 aa)) folds into the Fe2OG dioxygenase domain. Fe cation-binding residues include histidine 309, aspartate 311, and histidine 370. Arginine 379 contributes to the 2-oxoglutarate binding site.

Interacts with E3 ligase SIAH2. Interacts with LIMD1, WTIP and AJUBA. Requires Fe(2+) as cofactor. The cofactor is L-ascorbate. Ubiquitinated by SIAH1 and/or SIAH2 in response to the unfolded protein response (UPR), leading to its degradation. Highly expressed in testis, expression was also detected in the heart brain, liver kidney and lung. Expression was lowest in spleen and skeletal muscle. Constitutively expressed during differentiation of C2C12 skeletal myocytes.

It is found in the nucleus. It catalyses the reaction L-prolyl-[protein] + 2-oxoglutarate + O2 = trans-4-hydroxy-L-prolyl-[protein] + succinate + CO2. The enzyme catalyses L-prolyl-[hypoxia-inducible factor alpha subunit] + 2-oxoglutarate + O2 = trans-4-hydroxy-L-prolyl-[hypoxia-inducible factor alpha subunit] + succinate + CO2. Prolyl hydroxylase that mediates hydroxylation of proline residues in target proteins, such as ATF4, IKBKB, CEP192 and HIF1A. Target proteins are preferentially recognized via a LXXLAP motif. Cellular oxygen sensor that catalyzes, under normoxic conditions, the post-translational formation of 4-hydroxyproline in hypoxia-inducible factor (HIF) alpha proteins. Hydroxylates a specific proline found in each of the oxygen-dependent degradation (ODD) domains (N-terminal, NODD, and C-terminal, CODD) of HIF1A. Also hydroxylates HIF2A. Has a preference for the CODD site for both HIF1A and HIF2A. Hydroxylated HIFs are then targeted for proteasomal degradation via the von Hippel-Lindau ubiquitination complex. Under hypoxic conditions, the hydroxylation reaction is attenuated allowing HIFs to escape degradation resulting in their translocation to the nucleus, heterodimerization with HIF1B, and increased expression of hypoxy-inducible genes. EGLN2 is involved in regulating hypoxia tolerance and apoptosis in cardiac and skeletal muscle. Also regulates susceptibility to normoxic oxidative neuronal death. Links oxygen sensing to cell cycle and primary cilia formation by hydroxylating the critical centrosome component CEP192 which promotes its ubiquitination and subsequent proteasomal degradation. Hydroxylates IKBKB, mediating NF-kappa-B activation in hypoxic conditions. Also mediates hydroxylation of ATF4, leading to decreased protein stability of ATF4. The polypeptide is Prolyl hydroxylase EGLN2 (Mus musculus (Mouse)).